The following is a 364-amino-acid chain: MADALKDVPFKTVQVDALVAIKIATASGKAFPSLATGSLVGMEKNGVLEITNSFPYPEINTASADGQNDTAANLSAAAPRAKQNIAYGNEMIKFLREVNVDANNVGWYTSTSMGNFVNLNTIENQFYYQSQLNERTVALIYDVSRSSQGTLNLRAYRLSPSFVTAYKEGKFTTESLQKSSLRYQDILVELPVTVHNSHLLTSLLHQLPSEAPKEELSFPPNLAALQQDPNTPLPPLFPNYDALDLSIDPFLEKTCDLLLESIENHHTELNNYQYYQRQLAREQTKITAWQQKRKAENAARTASKQPLLPEDEWQRLFKLPAEPSRLETLLNSRQVEQYSRQVDGFAAGVTSKMFAVKSNLLPGE.

The region spanning 13 to 162 is the MPN domain; it reads VQVDALVAIK…LRAYRLSPSF (150 aa).

It belongs to the eIF-3 subunit H family. As to quaternary structure, component of the eukaryotic translation initiation factor 3 (eIF-3) complex.

The protein localises to the cytoplasm. Functionally, component of the eukaryotic translation initiation factor 3 (eIF-3) complex, which is involved in protein synthesis of a specialized repertoire of mRNAs and, together with other initiation factors, stimulates binding of mRNA and methionyl-tRNAi to the 40S ribosome. The eIF-3 complex specifically targets and initiates translation of a subset of mRNAs involved in cell proliferation. The protein is Eukaryotic translation initiation factor 3 subunit H of Phaeosphaeria nodorum (strain SN15 / ATCC MYA-4574 / FGSC 10173) (Glume blotch fungus).